A 151-amino-acid chain; its full sequence is Deoxyuridine 5'-triphosphate nucleotidohydrolase (151 aa).

Residues R70–G72, N83, L87–D89, and M97 each bind substrate.

Belongs to the dUTPase family. It depends on Mg(2+) as a cofactor.

It carries out the reaction dUTP + H2O = dUMP + diphosphate + H(+). Its pathway is pyrimidine metabolism; dUMP biosynthesis; dUMP from dCTP (dUTP route): step 2/2. In terms of biological role, this enzyme is involved in nucleotide metabolism: it produces dUMP, the immediate precursor of thymidine nucleotides and it decreases the intracellular concentration of dUTP so that uracil cannot be incorporated into DNA. This chain is Deoxyuridine 5'-triphosphate nucleotidohydrolase, found in Actinobacillus pleuropneumoniae serotype 5b (strain L20).